Here is a 197-residue protein sequence, read N- to C-terminus: MRTATVTRNTLETQITVSLNLDGTGVGRFETGVPFLDHMMDQIARHGLIDLDVKAVGDLHIDAHHTVEDIGITLGQAFAKAIGDKKGIRRYGHAYVPLDEALSRVVIDLSGRPGLVYNVDYTRACIGQFDVDLFSEFFHGFVNHSMVTLHIDNLRGHNSHHQAETIFKAFGRALRMACEHDERMAGITPSTKGTLSV.

Belongs to the imidazoleglycerol-phosphate dehydratase family.

Its subcellular location is the cytoplasm. The enzyme catalyses D-erythro-1-(imidazol-4-yl)glycerol 3-phosphate = 3-(imidazol-4-yl)-2-oxopropyl phosphate + H2O. It participates in amino-acid biosynthesis; L-histidine biosynthesis; L-histidine from 5-phospho-alpha-D-ribose 1-diphosphate: step 6/9. This chain is Imidazoleglycerol-phosphate dehydratase, found in Chromobacterium violaceum (strain ATCC 12472 / DSM 30191 / JCM 1249 / CCUG 213 / NBRC 12614 / NCIMB 9131 / NCTC 9757 / MK).